A 133-amino-acid polypeptide reads, in one-letter code: Ribosome-binding factor A (133 aa).

Belongs to the RbfA family. In terms of assembly, monomer. Binds 30S ribosomal subunits, but not 50S ribosomal subunits or 70S ribosomes.

The protein localises to the cytoplasm. In terms of biological role, one of several proteins that assist in the late maturation steps of the functional core of the 30S ribosomal subunit. Associates with free 30S ribosomal subunits (but not with 30S subunits that are part of 70S ribosomes or polysomes). Required for efficient processing of 16S rRNA. May interact with the 5'-terminal helix region of 16S rRNA. This is Ribosome-binding factor A from Bordetella bronchiseptica (strain ATCC BAA-588 / NCTC 13252 / RB50) (Alcaligenes bronchisepticus).